Reading from the N-terminus, the 197-residue chain is Imidazoleglycerol-phosphate dehydratase (197 aa).

This sequence belongs to the imidazoleglycerol-phosphate dehydratase family.

It localises to the cytoplasm. The catalysed reaction is D-erythro-1-(imidazol-4-yl)glycerol 3-phosphate = 3-(imidazol-4-yl)-2-oxopropyl phosphate + H2O. It functions in the pathway amino-acid biosynthesis; L-histidine biosynthesis; L-histidine from 5-phospho-alpha-D-ribose 1-diphosphate: step 6/9. This Marinomonas sp. (strain MWYL1) protein is Imidazoleglycerol-phosphate dehydratase.